The following is a 469-amino-acid chain: Programmed cell death protein 4 (469 aa).

Met-1 is modified (N-acetylmethionine). Disordered regions lie at residues 1 to 38 (MDVE…EIKN) and 58 to 128 (KAKR…GTPG). Ser-25 carries the phosphoserine modification. Residues 58-64 (KAKRRLR) carry the Nuclear localization signal motif. Ser-67 is subject to Phosphoserine; by PKB and RPS6KB1. 6 positions are modified to phosphoserine: Ser-68, Ser-71, Ser-76, Ser-78, Ser-80, and Ser-94. Positions 70-76 (DSGRGDS) match the Phosphodegron motif. Residues 74–83 (GDSVSDSGSD) are compositionally biased toward low complexity. Residues 114–125 (KKGGAGGKGVWG) are compositionally biased toward gly residues. The residue at position 152 (Tyr-152) is a Phosphotyrosine. In terms of domain architecture, MI 1 spans 163–284 (AFEKTLTPII…CNTYIDSYKG (122 aa)). Positions 241–250 (DKLLKDLPEL) match the Nuclear localization signal motif. Residues Ser-313 and Ser-317 each carry the phosphoserine modification. Residues 326–449 (HLVKEIDMLL…SKQLRDLCPS (124 aa)) enclose the MI 2 domain. Residue Ser-457 is modified to Phosphoserine; by PKB.

It belongs to the PDCD4 family. Interacts (via MI domains) with EIF4A2. Interacts (via MI domains) with EIF4A1 (via N-terminal domain). Heterotrimer with EIF4A1; one molecule of PDCD4 binds two molecules of EIF4A1. Interacts with EIF4G1. May form a complex with EIF4A1 and EIF4G1. The interaction between PDCD4 and EIF4A1 interferes with the interaction between EIF4A1 and EIF4G. When phosphorylated, interacts with BTRC and FBXW11. Polyubiquitinated, leading to its proteasomal degradation. Rapidly degraded in response to mitogens. Phosphorylation of the phosphodegron promotes interaction with BTRC and proteasomal degradation. In terms of processing, phosphorylated at Ser-67 by RPS6KB1 in response to mitogens; phosphorylation promotes proteasomal degradation of PDCD4. In terms of tissue distribution, up-regulated in proliferative cells. Highly expressed in epithelial cells of the mammary gland. Reduced expression in lung cancer and colon carcinoma.

It is found in the nucleus. Its subcellular location is the cytoplasm. Inhibits translation initiation and cap-dependent translation. May excert its function by hindering the interaction between EIF4A1 and EIF4G. Inhibits the helicase activity of EIF4A. Modulates the activation of JUN kinase. Down-regulates the expression of MAP4K1, thus inhibiting events important in driving invasion, namely, MAPK85 activation and consequent JUN-dependent transcription. May play a role in apoptosis. Tumor suppressor. Inhibits tumor promoter-induced neoplastic transformation. Binds RNA. The sequence is that of Programmed cell death protein 4 (PDCD4) from Homo sapiens (Human).